The following is a 177-amino-acid chain: Acireductone dioxygenase (177 aa).

Fe(2+) is bound by residues histidine 97, histidine 99, glutamate 103, and histidine 141. The Ni(2+) site is built by histidine 97, histidine 99, glutamate 103, and histidine 141.

The protein belongs to the acireductone dioxygenase (ARD) family. In terms of assembly, monomer. Fe(2+) serves as cofactor. It depends on Ni(2+) as a cofactor.

It catalyses the reaction 1,2-dihydroxy-5-(methylsulfanyl)pent-1-en-3-one + O2 = 3-(methylsulfanyl)propanoate + CO + formate + 2 H(+). The enzyme catalyses 1,2-dihydroxy-5-(methylsulfanyl)pent-1-en-3-one + O2 = 4-methylsulfanyl-2-oxobutanoate + formate + 2 H(+). The protein operates within amino-acid biosynthesis; L-methionine biosynthesis via salvage pathway; L-methionine from S-methyl-5-thio-alpha-D-ribose 1-phosphate: step 5/6. In terms of biological role, catalyzes 2 different reactions between oxygen and the acireductone 1,2-dihydroxy-3-keto-5-methylthiopentene (DHK-MTPene) depending upon the metal bound in the active site. Fe-containing acireductone dioxygenase (Fe-ARD) produces formate and 2-keto-4-methylthiobutyrate (KMTB), the alpha-ketoacid precursor of methionine in the methionine recycle pathway. Ni-containing acireductone dioxygenase (Ni-ARD) produces methylthiopropionate, carbon monoxide and formate, and does not lie on the methionine recycle pathway. The protein is Acireductone dioxygenase of Leptospira biflexa serovar Patoc (strain Patoc 1 / ATCC 23582 / Paris).